A 425-amino-acid polypeptide reads, in one-letter code: Polyribonucleotide 5'-hydroxyl-kinase Clp1 (425 aa).

ATP is bound by residues glutamate 22, lysine 62, and 124–129 (DVGKST).

The protein belongs to the Clp1 family. Clp1 subfamily. In terms of assembly, component of the tRNA splicing endonuclease complex, composed of CLP1, TSEN2, TSEN15, TSEN34 and TSEN54. Component of pre-mRNA cleavage complex II (CF-II). Also associates with numerous components of the pre-mRNA cleavage complex I (CF-I/CFIm), including NUDT21, CPSF2, CPSF3, CPSF6 and CPSF7. Interacts with CSTF2 and SYMPK. Mg(2+) is required as a cofactor. It depends on Mn(2+) as a cofactor. Ni(2+) serves as cofactor.

The protein resides in the nucleus. The enzyme catalyses a 5'-end dephospho-2'-deoxyribonucleoside-DNA + ATP = a 5'-end 5'-phospho-2'-deoxyribonucleoside-DNA + ADP + H(+). It carries out the reaction a 5'-end dephospho-ribonucleoside-RNA + ATP = a 5'-end 5'-phospho-ribonucleoside-RNA + ADP + H(+). Its function is as follows. Polynucleotide kinase that can phosphorylate the 5'-hydroxyl groups of double-stranded RNA (dsRNA), single-stranded RNA (ssRNA), double-stranded DNA (dsDNA) and double-stranded DNA:RNA hybrids. dsRNA is phosphorylated more efficiently than dsDNA, and the RNA component of a DNA:RNA hybrid is phosphorylated more efficiently than the DNA component. Plays a key role in both tRNA splicing and mRNA 3'-end formation. Component of the tRNA splicing endonuclease complex: phosphorylates the 5'-terminus of the tRNA 3'-exon during tRNA splicing; this phosphorylation event is a prerequisite for the subsequent ligation of the two exon halves and the production of a mature tRNA. Its role in tRNA splicing and maturation is required for cerebellar development. Component of the pre-mRNA cleavage complex II (CF-II), which seems to be required for mRNA 3'-end formation. Also phosphorylates the 5'-terminus of exogenously introduced short interfering RNAs (siRNAs), which is a necessary prerequisite for their incorporation into the RNA-induced silencing complex (RISC). However, endogenous siRNAs and microRNAs (miRNAs) that are produced by the cleavage of dsRNA precursors by DICER1 already contain a 5'-phosphate group, so this protein may be dispensible for normal RNA-mediated gene silencing. This is Polyribonucleotide 5'-hydroxyl-kinase Clp1 from Homo sapiens (Human).